The primary structure comprises 134 residues: Fatty acid-binding protein 5 (134 aa).

A Nuclear localization signal motif is present at residues 23-33; sequence KELGVGMAMRK. Residues R109 and 129–131 contribute to the hexadecanoate site; that span reads RVY. The N-eicosanoyl ethanolamine site is built by R109 and Y131. 129-131 contacts (9Z,12Z)-octadecadienoate; it reads RVY.

It belongs to the calycin superfamily. Fatty-acid binding protein (FABP) family. Monomer.

It localises to the cytoplasm. The protein resides in the nucleus. It is found in the synapse. The protein localises to the postsynaptic density. Its subcellular location is the secreted. It catalyses the reaction hexadecanoate(out) = hexadecanoate(in). It carries out the reaction (9Z,12Z)-octadecadienoate(out) = (9Z,12Z)-octadecadienoate(in). The enzyme catalyses (9Z)-octadecenoate(out) = (9Z)-octadecenoate(in). Intracellular carrier for long-chain fatty acids and related active lipids, such as endocannabinoids, that regulate the metabolism and actions of the ligands they bind. In addition to the cytosolic transport, selectively delivers specific fatty acids from the cytosol to the nucleus, wherein they activate nuclear receptors. Delivers retinoic acid to the nuclear receptor peroxisome proliferator-activated receptor delta; which promotes proliferation and survival. May also serve as a synaptic carrier of endocannabinoid at central synapses and thus controls retrograde endocannabinoid signaling. Modulates inflammation by regulating PTGES induction via NF-kappa-B activation, and prostaglandin E2 (PGE2) biosynthesis during inflammation. Has the highest binding affinity for docosahexaenoic acid (DHA) and decreasing relative affinity for eicosapentaenoic acid (EPA), alpha-linolenic acid (ALA), oleic acid, palmitic acid, linoleic acid and stearic acid, respectively. This Pygoscelis papua (Gentoo penguin) protein is Fatty acid-binding protein 5.